The sequence spans 483 residues: Membrane-bound lytic murein transglycosylase F (483 aa).

An N-terminal signal peptide occupies residues 1-18; that stretch reads MKGLIARFIAGFALLLWA. The non-LT domain stretch occupies residues 19 to 267; the sequence is WDMVFPWQQL…RIEEKYFNHL (249 aa). An LT domain region spans residues 269-483; it reads HFDYVDIQSY…SKESDSTLKE (215 aa). Glu312 is a catalytic residue. A disordered region spans residues 459-483; sequence QIQNNEEQSSVPQEISKESDSTLKE. Over residues 473 to 483 the composition is skewed to basic and acidic residues; it reads ISKESDSTLKE.

This sequence in the N-terminal section; belongs to the bacterial solute-binding protein 3 family. It in the C-terminal section; belongs to the transglycosylase Slt family.

The protein localises to the cell outer membrane. It catalyses the reaction Exolytic cleavage of the (1-&gt;4)-beta-glycosidic linkage between N-acetylmuramic acid (MurNAc) and N-acetylglucosamine (GlcNAc) residues in peptidoglycan, from either the reducing or the non-reducing ends of the peptidoglycan chains, with concomitant formation of a 1,6-anhydrobond in the MurNAc residue.. In terms of biological role, murein-degrading enzyme that degrades murein glycan strands and insoluble, high-molecular weight murein sacculi, with the concomitant formation of a 1,6-anhydromuramoyl product. Lytic transglycosylases (LTs) play an integral role in the metabolism of the peptidoglycan (PG) sacculus. Their lytic action creates space within the PG sacculus to allow for its expansion as well as for the insertion of various structures such as secretion systems and flagella. The polypeptide is Membrane-bound lytic murein transglycosylase F (Actinobacillus pleuropneumoniae serotype 7 (strain AP76)).